We begin with the raw amino-acid sequence, 230 residues long: Transmembrane protein 221 (230 aa).

A run of 4 helical transmembrane segments spans residues 12-32 (AMTLLGIPAAVLVALAAQLLF), 73-93 (ALAALAQVLGLSCLLLAALCG), 125-145 (LFCCGVSVYLAALAIYALLLF), and 147-167 (IEAGAAAASILGSGALILVAI). Residues 184–230 (RELSPPSFEDEPARPSEDSKSGCRAQPPQDEETETPIGAVTHQGSHF) are disordered. A compositionally biased stretch (basic and acidic residues) spans 194–204 (EPARPSEDSKS).

The protein resides in the membrane. This is Transmembrane protein 221 (Tmem221) from Mus musculus (Mouse).